The following is a 502-amino-acid chain: 4,4'-diapophytoene desaturase (4,4'-diaponeurosporene-forming) (502 aa).

5-17 (VIGAGVTGLAAAA) provides a ligand contact to FAD.

The protein belongs to the carotenoid/retinoid oxidoreductase family. CrtN subfamily.

The catalysed reaction is 15-cis-4,4'-diapophytoene + 3 FAD + 3 H(+) = all-trans-4,4'-diaponeurosporene + 3 FADH2. The protein operates within carotenoid biosynthesis; staphyloxanthin biosynthesis; staphyloxanthin from farnesyl diphosphate: step 2/5. Functionally, involved in the biosynthesis of the yellow-orange carotenoid staphyloxanthin, which plays a role in the virulence via its protective function against oxidative stress. Catalyzes three successive dehydrogenation reactions that lead to the introduction of three double bonds into 4,4'-diapophytoene (dehydrosqualene), with 4,4'-diapophytofluene and 4,4'-diapo-zeta-carotene as intermediates, and 4,4'-diaponeurosporene (the major deep-yellow pigment in staphylococci strains) as the end product. This chain is 4,4'-diapophytoene desaturase (4,4'-diaponeurosporene-forming), found in Staphylococcus aureus (strain MW2).